The primary structure comprises 185 residues: Elongation factor P (185 aa).

This sequence belongs to the elongation factor P family.

It localises to the cytoplasm. The protein operates within protein biosynthesis; polypeptide chain elongation. In terms of biological role, involved in peptide bond synthesis. Stimulates efficient translation and peptide-bond synthesis on native or reconstituted 70S ribosomes in vitro. Probably functions indirectly by altering the affinity of the ribosome for aminoacyl-tRNA, thus increasing their reactivity as acceptors for peptidyl transferase. The sequence is that of Elongation factor P from Acaryochloris marina (strain MBIC 11017).